The chain runs to 208 residues: Glutathione S-transferase 1 (208 aa).

Residues 1-80 (MDFYYLPGSA…YLVEKYGKTD (80 aa)) enclose the GST N-terminal domain. Glutathione-binding positions include Ser-9, 50 to 52 (HTI), and 64 to 66 (ESR). Positions 86–207 (CPKKRAVINQ…AGCLEFKKYF (122 aa)) constitute a GST C-terminal domain.

Belongs to the GST superfamily. Theta family. As to quaternary structure, homodimer.

It catalyses the reaction RX + glutathione = an S-substituted glutathione + a halide anion + H(+). Functionally, conjugation of reduced glutathione to a wide number of exogenous and endogenous hydrophobic electrophiles. The protein is Glutathione S-transferase 1 (Gst1) of Musca domestica (House fly).